The primary structure comprises 220 residues: Adenylate kinase (220 aa).

13–18 contributes to the ATP binding site; it reads GAGKGT. Positions 33 to 62 are NMP; that stretch reads ATGDMLRSQVARQTELGKEAKKIMDQGGLV. Residues Thr34, Arg39, 60–62, 89–92, and Gln96 each bind AMP; these read GLV and GFPR. Residues 130 to 167 are LID; sequence GRLVHPGSGRSYHLEFNPPKVPMKDDVTGEPLIQRSDD. Residues Arg131 and 140–141 each bind ATP; that span reads SY. Arg164 and Arg175 together coordinate AMP. Gln203 is an ATP binding site.

The protein belongs to the adenylate kinase family. AK2 subfamily. In terms of assembly, monomer.

The protein resides in the cytoplasm. It is found in the cytosol. Its subcellular location is the mitochondrion intermembrane space. It localises to the nucleus. It carries out the reaction AMP + ATP = 2 ADP. Catalyzes the reversible transfer of the terminal phosphate group between ATP and AMP. Plays an important role in cellular energy homeostasis and in adenine nucleotide metabolism. Adenylate kinase activity is critical for regulation of the phosphate utilization and the AMP de novo biosynthesis pathways. The sequence is that of Adenylate kinase (adk1) from Schizosaccharomyces pombe (strain 972 / ATCC 24843) (Fission yeast).